Here is a 338-residue protein sequence, read N- to C-terminus: MTRF1L release factor glutamine methyltransferase (338 aa).

S-adenosyl-L-methionine-binding positions include 167 to 171 (GCGSG), aspartate 190, tryptophan 225, and asparagine 239. 239-242 (NPPY) contributes to the substrate binding site.

The protein belongs to the protein N5-glutamine methyltransferase family.

It is found in the mitochondrion. The enzyme catalyses L-glutaminyl-[peptide chain release factor] + S-adenosyl-L-methionine = N(5)-methyl-L-glutaminyl-[peptide chain release factor] + S-adenosyl-L-homocysteine + H(+). Functionally, N5-glutamine methyltransferase responsible for the methylation of the glutamine residue in the universally conserved GGQ motif of the mitochondrial translation release factors MTRF1, MTRF1L, MRPL58/ICT1 and MTRFR. The chain is MTRF1L release factor glutamine methyltransferase (HEMK1) from Homo sapiens (Human).